Here is a 264-residue protein sequence, read N- to C-terminus: Acyl-[acyl-carrier-protein]--UDP-N-acetylglucosamine O-acyltransferase (264 aa).

It belongs to the transferase hexapeptide repeat family. LpxA subfamily. Homotrimer.

Its subcellular location is the cytoplasm. It carries out the reaction a (3R)-hydroxyacyl-[ACP] + UDP-N-acetyl-alpha-D-glucosamine = a UDP-3-O-[(3R)-3-hydroxyacyl]-N-acetyl-alpha-D-glucosamine + holo-[ACP]. It functions in the pathway glycolipid biosynthesis; lipid IV(A) biosynthesis; lipid IV(A) from (3R)-3-hydroxytetradecanoyl-[acyl-carrier-protein] and UDP-N-acetyl-alpha-D-glucosamine: step 1/6. Involved in the biosynthesis of lipid A, a phosphorylated glycolipid that anchors the lipopolysaccharide to the outer membrane of the cell. The chain is Acyl-[acyl-carrier-protein]--UDP-N-acetylglucosamine O-acyltransferase from Rickettsia peacockii (strain Rustic).